The primary structure comprises 103 residues: uncharacterized protein (103 aa).

This is an uncharacterized protein from Pseudescherichia vulneris (Escherichia vulneris).